The chain runs to 408 residues: Probable pectate lyase 18 (408 aa).

The first 24 residues, 1–24, serve as a signal peptide directing secretion; the sequence is MKMQTKKLFITIVSFLLYAPLFLS. N-linked (GlcNAc...) asparagine glycosylation occurs at asparagine 42. Aspartate 206, aspartate 230, and aspartate 234 together coordinate Ca(2+). Arginine 286 is a catalytic residue.

The protein belongs to the polysaccharide lyase 1 family. Ca(2+) serves as cofactor. As to expression, expressed in flowers, but not in leaves.

The catalysed reaction is Eliminative cleavage of (1-&gt;4)-alpha-D-galacturonan to give oligosaccharides with 4-deoxy-alpha-D-galact-4-enuronosyl groups at their non-reducing ends.. It functions in the pathway glycan metabolism; pectin degradation; 2-dehydro-3-deoxy-D-gluconate from pectin: step 2/5. The polypeptide is Probable pectate lyase 18 (Arabidopsis thaliana (Mouse-ear cress)).